The chain runs to 288 residues: Inorganic pyrophosphatase (288 aa).

Arg80 contributes to the diphosphate binding site. Mg(2+) contacts are provided by Asp117, Asp122, and Asp154. A disordered region spans residues 252–271 (TPSYSDAAAQEIPSASPAPA). Residues 258-271 (AAAQEIPSASPAPA) show a composition bias toward low complexity.

Belongs to the PPase family. Mg(2+) is required as a cofactor.

The protein resides in the cytoplasm. The catalysed reaction is diphosphate + H2O = 2 phosphate + H(+). This is Inorganic pyrophosphatase (IPP1) from Candida albicans (strain SC5314 / ATCC MYA-2876) (Yeast).